The sequence spans 504 residues: TGF-beta-activated kinase 1 and MAP3K7-binding protein 1 (504 aa).

Positions Met1–Pro22 are disordered. The residue at position 7 (Ser7) is a Phosphoserine. The segment covering Ser7–Trp17 has biased composition (polar residues). One can recognise a PPM-type phosphatase domain in the interval Gly28 to Phe365. Phosphoserine is present on Ser378. The O-linked (GlcNAc) serine glycan is linked to Ser395. At Ser423 the chain carries Phosphoserine; by MAPK14. A compositionally biased stretch (polar residues) spans Ala430–Pro439. Residues Ala430 to Val478 form a disordered region. Phosphothreonine; by MAPK14 is present on Thr431. At Ser438 the chain carries Phosphoserine; by MAPK14. Low complexity predominate over residues Thr440–Ser457. Position 442 is a phosphothreonine (Thr442).

Interacts with XIAP and BIRC7. Interacts with TRAF6 and MAP3K7; during IL-1 signaling. Identified in the TRIKA2 complex composed of MAP3K7, TAB1 and TAB2. Interacts with TRAF6 and MAPK14; these interactions allow MAPK14 autophosphorylation. Interacts with STING1; interaction takes place following cGAMP activation and promotes TAB1 recruitment to the endoplasmic reticulum, triggering MAP3K7/TAK1 activation and STING1 phosphorylation. In terms of processing, phosphorylated at all three sites Ser-423, Thr-431 and Ser-438 by MAPK14 when cells were exposed to cellular stresses, or stimulated with TNF-alpha, IL1 or LPS. These phosphorylations inhibit TAK1 activation by a feedback control mechanism. Dephosphorylated by DUSP14 at Ser-438, leading to TAB1-MAP3K7/TAK1 complex inactivation in T-cells. Post-translationally, ubiquitinated by MAP3K1 with 'Lys-63'-linked polyubiquitin; leading to activation of TAK1 and of JNK and p38 MAP kinases following EGF and TGF-beta stimulation. Ubiquitinated by ITCH with 'Lys-48'-linked polyubiquitin; leading to proteasomal degradation. Ubiquitinated by RNF114 during maternal-to-zygotic transition; leading to degradation. (Microbial infection) Deubiquitinated by Y.enterocolitica YopP. In terms of processing, O-GlcNAcylated at Ser-395 by OGT is required for full MAP3K7/TAK1 activation upon stimulation with IL-1 or osmotic stress. Deglycosylated at Ser-395 by OGA. Ubiquitous.

The protein localises to the cytoplasm. Its subcellular location is the cytosol. It is found in the endoplasmic reticulum membrane. Its function is as follows. Key adapter protein that plays an essential role in JNK and NF-kappa-B activation and proinflammatory cytokines production in response to stimulation with TLRs and cytokines. Mechanistically, associates with the catalytic domain of MAP3K7/TAK1 to trigger MAP3K7/TAK1 autophosphorylation leading to its full activation. Similarly, associates with MAPK14 and triggers its autophosphorylation and subsequent activation. In turn, MAPK14 phosphorylates TAB1 and inhibits MAP3K7/TAK1 activation in a feedback control mechanism. Also plays a role in recruiting MAPK14 to the TAK1 complex for the phosphorylation of the TAB2 and TAB3 regulatory subunits. The sequence is that of TGF-beta-activated kinase 1 and MAP3K7-binding protein 1 (TAB1) from Homo sapiens (Human).